Reading from the N-terminus, the 402-residue chain is Enoyl-[acyl-carrier-protein] reductase [NADH] (402 aa).

Residues 48–53 (GASSGY), 74–75 (FE), 111–112 (DA), and 140–141 (LA) contribute to the NAD(+) site. Tyr226 contributes to the substrate binding site. The active-site Proton donor is Tyr236. NAD(+)-binding positions include Lys245 and 274–276 (VVT).

It belongs to the TER reductase family. As to quaternary structure, monomer.

The catalysed reaction is a 2,3-saturated acyl-[ACP] + NAD(+) = a (2E)-enoyl-[ACP] + NADH + H(+). It participates in lipid metabolism; fatty acid biosynthesis. In terms of biological role, involved in the final reduction of the elongation cycle of fatty acid synthesis (FAS II). Catalyzes the reduction of a carbon-carbon double bond in an enoyl moiety that is covalently linked to an acyl carrier protein (ACP). This Xanthomonas campestris pv. campestris (strain 8004) protein is Enoyl-[acyl-carrier-protein] reductase [NADH].